The primary structure comprises 90 residues: Small ribosomal subunit protein bS20 (90 aa).

The interval 1-25 is disordered; that stretch reads MANSAQARKRARQAAKANSHNSALR.

This sequence belongs to the bacterial ribosomal protein bS20 family.

In terms of biological role, binds directly to 16S ribosomal RNA. In Burkholderia multivorans (strain ATCC 17616 / 249), this protein is Small ribosomal subunit protein bS20.